We begin with the raw amino-acid sequence, 272 residues long: 3-hydroxyanthranilate 3,4-dioxygenase (272 aa).

Positions 1-154 (MMEWIDENSS…SEEHKTGKPS (154 aa)) are domain A (catalytic). Arginine 38 provides a ligand contact to O2. 3 residues coordinate Fe cation: histidine 42, glutamate 48, and histidine 86. Glutamate 48 contributes to the substrate binding site. Substrate is bound by residues arginine 90 and glutamate 100. The interval 155–169 (KESSCSINVDTETEL) is linker. A domain B region spans residues 170 to 272 (MEPFPLKQWL…SITVDSLANK (103 aa)).

It belongs to the 3-HAO family. The cofactor is Fe(2+).

It localises to the cytoplasm. It catalyses the reaction 3-hydroxyanthranilate + O2 = (2Z,4Z)-2-amino-3-carboxymuconate 6-semialdehyde. It functions in the pathway cofactor biosynthesis; NAD(+) biosynthesis; quinolinate from L-kynurenine: step 3/3. Functionally, catalyzes the oxidative ring opening of 3-hydroxyanthranilate to 2-amino-3-carboxymuconate semialdehyde, which spontaneously cyclizes to quinolinate. In Nematostella vectensis (Starlet sea anemone), this protein is 3-hydroxyanthranilate 3,4-dioxygenase.